A 427-amino-acid polypeptide reads, in one-letter code: Glucose-1-phosphate adenylyltransferase (427 aa).

AMP is bound by residues R40, H46, and R52. Y114 is an alpha-D-glucose 1-phosphate binding site. R130 is an AMP binding site. Alpha-D-glucose 1-phosphate contacts are provided by residues G179, 194–195 (EK), and S212. R386 contributes to the AMP binding site.

The protein belongs to the bacterial/plant glucose-1-phosphate adenylyltransferase family. Homotetramer.

The enzyme catalyses alpha-D-glucose 1-phosphate + ATP + H(+) = ADP-alpha-D-glucose + diphosphate. Its pathway is glycan biosynthesis; glycogen biosynthesis. Its activity is regulated as follows. Allosterically activated by fructose-1,6-bisphosphate (F16BP) and inhibited by AMP. Involved in the biosynthesis of ADP-glucose, a building block required for the elongation reactions to produce glycogen. Catalyzes the reaction between ATP and alpha-D-glucose 1-phosphate (G1P) to produce pyrophosphate and ADP-Glc. This is Glucose-1-phosphate adenylyltransferase from Cronobacter sakazakii (strain ATCC BAA-894) (Enterobacter sakazakii).